The sequence spans 1915 residues: Ankyrin repeat domain-containing protein 36A (1915 aa).

ANK repeat units lie at residues 31-60 (YHLK…DANK), 64-93 (KERT…ELNL), 97-126 (EDRT…NPNI), 130-159 (FGRT…NIEE), 163-192 (CEYQ…NVNA), and 196-225 (LGRS…DVLS). 5 disordered regions span residues 261–331 (PINS…DEQK), 470–619 (ATGQ…QKQS), 639–663 (MGGG…DKTD), 676–1203 (LQCG…KATS), and 1285–1304 (KDVQ…SEGE). 2 stretches are compositionally biased toward polar residues: residues 262-272 (INSNPVSSQKQ) and 297-306 (KSGTVSSQKQ). A compositionally biased stretch (low complexity) spans 505–521 (SLTSSEESSERPPLSTL). Composition is skewed to basic and acidic residues over residues 551–562 (PAEKATSDDKDS) and 585–596 (PAEKATSDEKDS). Polar residues-rich tracts occupy residues 597-619 (VSNI…QKQS) and 645-657 (GTVS…ASKA). Composition is skewed to basic and acidic residues over residues 806 to 815 (RENKDGEKSR), 874 to 883 (RENKDGEKSR), 931 to 951 (SDEK…EISR), 976 to 985 (RENKDGEKSR), 1044 to 1053 (RENKDGEKSR), 1100 to 1121 (TSDE…EKSR), and 1134 to 1152 (ICDK…KDEQ). Positions 1175 to 1196 (VSNIPTEIKDGQQSGTVSSQKQ) are enriched in polar residues. Coiled-coil stretches lie at residues 1383–1466 (IKLK…TEEQ), 1504–1531 (KEDL…IKNQ), 1573–1614 (LAAL…ARCD), and 1727–1814 (NMLL…KRDD). The tract at residues 1489–1508 (KTGGNNSNQVSETDEKEDLL) is disordered.

It belongs to the ANKRD36 family.

The sequence is that of Ankyrin repeat domain-containing protein 36A (ANKRD36) from Homo sapiens (Human).